A 168-amino-acid chain; its full sequence is MNYYEVGKIVNTHGIKGELKIISKTDFPEDRFKPGNILYIRDNGKINSYEIKSHRTHKQFEMITFKGLENINLVENLKGKILEISEEQQENLSDGNYYHHQIIGLDVFSEDNNYIGVIKEIMSPGANDVWVVKRKGSSDLLLPAIKDVIKKIDLEQNKVIIELLDGLD.

The 74-residue stretch at D94–L167 folds into the PRC barrel domain.

The protein belongs to the RimM family. As to quaternary structure, binds ribosomal protein uS19.

It is found in the cytoplasm. Its function is as follows. An accessory protein needed during the final step in the assembly of 30S ribosomal subunit, possibly for assembly of the head region. Essential for efficient processing of 16S rRNA. May be needed both before and after RbfA during the maturation of 16S rRNA. It has affinity for free ribosomal 30S subunits but not for 70S ribosomes. The protein is Ribosome maturation factor RimM of Ligilactobacillus salivarius (strain UCC118) (Lactobacillus salivarius).